Reading from the N-terminus, the 199-residue chain is HTH-type transcriptional repressor NemR (199 aa).

An HTH tetR-type domain is found at 7–67 (HDTREHLLAT…AMLERHYAAY (61 aa)). Residues 30 to 49 (GLSELLKTAEVPKGSFYHYF) constitute a DNA-binding region (H-T-H motif).

Its function is as follows. Involved in response to both electrophiles and reactive chlorine species (RCS). Represses the transcription of the nemRA-gloA operon by binding to the NemR box. The protein is HTH-type transcriptional repressor NemR (nemR) of Escherichia coli O6:H1 (strain CFT073 / ATCC 700928 / UPEC).